Reading from the N-terminus, the 216-residue chain is Thymidine kinase (216 aa).

ATP contacts are provided by residues 9–16 (GTMDCGKS) and 86–89 (DEAQ). Catalysis depends on Glu87, which acts as the Proton acceptor.

The protein belongs to the thymidine kinase family. Homotetramer.

It is found in the cytoplasm. The catalysed reaction is thymidine + ATP = dTMP + ADP + H(+). This Streptomyces avermitilis (strain ATCC 31267 / DSM 46492 / JCM 5070 / NBRC 14893 / NCIMB 12804 / NRRL 8165 / MA-4680) protein is Thymidine kinase.